We begin with the raw amino-acid sequence, 298 residues long: GTP cyclohydrolase FolE2 (298 aa).

Belongs to the GTP cyclohydrolase IV family.

The enzyme catalyses GTP + H2O = 7,8-dihydroneopterin 3'-triphosphate + formate + H(+). It functions in the pathway cofactor biosynthesis; 7,8-dihydroneopterin triphosphate biosynthesis; 7,8-dihydroneopterin triphosphate from GTP: step 1/1. Converts GTP to 7,8-dihydroneopterin triphosphate. This is GTP cyclohydrolase FolE2 from Xylella fastidiosa (strain M23).